The chain runs to 348 residues: sn-glycerol-3-phosphate import ATP-binding protein UgpC 3 (348 aa).

The region spanning 4–234 is the ABC transporter domain; the sequence is INIVDVKKNY…PASLFVAGFI (231 aa). 36–43 is a binding site for ATP; it reads GPSGCGKS.

It belongs to the ABC transporter superfamily. sn-glycerol-3-phosphate importer (TC 3.A.1.1.3) family. In terms of assembly, the complex is composed of two ATP-binding proteins (UgpC), two transmembrane proteins (UgpA and UgpE) and a solute-binding protein (UgpB).

The protein localises to the cell inner membrane. It carries out the reaction sn-glycerol 3-phosphate(out) + ATP + H2O = sn-glycerol 3-phosphate(in) + ADP + phosphate + H(+). Functionally, part of the ABC transporter complex UgpBAEC involved in sn-glycerol-3-phosphate (G3P) import. Responsible for energy coupling to the transport system. This is sn-glycerol-3-phosphate import ATP-binding protein UgpC 3 from Rhizobium etli (strain ATCC 51251 / DSM 11541 / JCM 21823 / NBRC 15573 / CFN 42).